The chain runs to 238 residues: tRNA (guanine-N(7)-)-methyltransferase (238 aa).

4 residues coordinate S-adenosyl-L-methionine: glutamate 70, aspartate 95, aspartate 122, and aspartate 145. Residue aspartate 145 is part of the active site. Substrate-binding positions include lysine 149, aspartate 181, and 216 to 219 (TKFE).

It belongs to the class I-like SAM-binding methyltransferase superfamily. TrmB family.

The catalysed reaction is guanosine(46) in tRNA + S-adenosyl-L-methionine = N(7)-methylguanosine(46) in tRNA + S-adenosyl-L-homocysteine. It participates in tRNA modification; N(7)-methylguanine-tRNA biosynthesis. Its function is as follows. Catalyzes the formation of N(7)-methylguanine at position 46 (m7G46) in tRNA. This Neisseria meningitidis serogroup A / serotype 4A (strain DSM 15465 / Z2491) protein is tRNA (guanine-N(7)-)-methyltransferase.